The following is a 116-amino-acid chain: uncharacterized protein (116 aa).

Disordered stretches follow at residues 1–26 (MLLT…KSSN) and 74–116 (ENDL…KSSI). Positions 14–26 (SANSTDDSSKSSN) are enriched in low complexity. Basic and acidic residues predominate over residues 74-86 (ENDLKRSKSQGRE). Residues 104–116 (NTASEIQRTKSSI) show a composition bias toward polar residues.

This is an uncharacterized protein from Saccharomyces cerevisiae (strain ATCC 204508 / S288c) (Baker's yeast).